The primary structure comprises 330 residues: Phosphate acyltransferase (330 aa).

The protein belongs to the PlsX family. Homodimer. Probably interacts with PlsY.

Its subcellular location is the cytoplasm. It carries out the reaction a fatty acyl-[ACP] + phosphate = an acyl phosphate + holo-[ACP]. The protein operates within lipid metabolism; phospholipid metabolism. Functionally, catalyzes the reversible formation of acyl-phosphate (acyl-PO(4)) from acyl-[acyl-carrier-protein] (acyl-ACP). This enzyme utilizes acyl-ACP as fatty acyl donor, but not acyl-CoA. This chain is Phosphate acyltransferase, found in Bacillus cereus (strain G9842).